The primary structure comprises 461 residues: uncharacterized protein (461 aa).

Positions 1-19 (MEKCSHESGRHSAENDGKY) are enriched in basic and acidic residues. The disordered stretch occupies residues 1-21 (MEKCSHESGRHSAENDGKYDI).

It belongs to the CapA family.

Its function is as follows. Could be involved in the biosynthesis of a cell wall component. This is an uncharacterized protein from Sinorhizobium fredii (strain NBRC 101917 / NGR234).